A 437-amino-acid chain; its full sequence is Dolichyl-diphosphooligosaccharide--protein glycosyltransferase subunit wbp1 (437 aa).

Positions 1–19 are cleaved as a signal peptide; the sequence is MKSALCIALALTWSLLVQA. Residues 20–401 lie on the Lumenal side of the membrane; the sequence is ARQTVLAVAD…FPRFLPHAYP (382 aa). Residues Asn-275 and Asn-289 are each glycosylated (N-linked (GlcNAc...) asparagine). Residues 402–422 traverse the membrane as a helical segment; the sequence is YYASCFSVLGAFLLFCGIWLL. The Cytoplasmic segment spans residues 423–437; that stretch reads QKPAKPVVPSAKKQN.

It belongs to the DDOST 48 kDa subunit family. Component of the oligosaccharyltransferase (OST) complex.

It localises to the endoplasmic reticulum. Its subcellular location is the membrane. The protein operates within protein modification; protein glycosylation. In terms of biological role, subunit of the oligosaccharyl transferase (OST) complex that catalyzes the initial transfer of a defined glycan (Glc(3)Man(9)GlcNAc(2) in eukaryotes) from the lipid carrier dolichol-pyrophosphate to an asparagine residue within an Asn-X-Ser/Thr consensus motif in nascent polypeptide chains, the first step in protein N-glycosylation. N-glycosylation occurs cotranslationally and the complex associates with the Sec61 complex at the channel-forming translocon complex that mediates protein translocation across the endoplasmic reticulum (ER). All subunits are required for a maximal enzyme activity. In Schizosaccharomyces pombe (strain 972 / ATCC 24843) (Fission yeast), this protein is Dolichyl-diphosphooligosaccharide--protein glycosyltransferase subunit wbp1 (wbp1).